A 208-amino-acid chain; its full sequence is TnpB-like protein MJ0012 (208 aa).

C83, C86, C100, and C103 together coordinate Zn(2+).

The protein belongs to the transposase 35 family.

The sequence is that of TnpB-like protein MJ0012 from Methanocaldococcus jannaschii (strain ATCC 43067 / DSM 2661 / JAL-1 / JCM 10045 / NBRC 100440) (Methanococcus jannaschii).